The chain runs to 261 residues: Probable septum site-determining protein MinC (261 aa).

The disordered stretch occupies residues 106–144; that stretch reads RAPAAKPADEAEPAAVPAVETAAAPAAAAAPEQSSDPAP. A compositionally biased stretch (low complexity) spans 118–144; that stretch reads PAAVPAVETAAAPAAAAAPEQSSDPAP.

It belongs to the MinC family. In terms of assembly, interacts with MinD and FtsZ.

In terms of biological role, cell division inhibitor that blocks the formation of polar Z ring septums. Rapidly oscillates between the poles of the cell to destabilize FtsZ filaments that have formed before they mature into polar Z rings. Prevents FtsZ polymerization. The polypeptide is Probable septum site-determining protein MinC (Burkholderia orbicola (strain MC0-3)).